We begin with the raw amino-acid sequence, 492 residues long: uncharacterized protein (492 aa).

Residues 1–22 (MIRPNMFALLMLVVLAITSVNA) form the signal peptide. Residues Asn-92, Asn-97, Asn-119, Asn-146, Asn-213, Asn-267, and Asn-458 are each glycosylated (N-linked (GlcNAc...) asparagine; by host).

The protein localises to the secreted. This is an uncharacterized protein from Acanthamoeba polyphaga (Amoeba).